The following is a 322-amino-acid chain: N-acetyl-gamma-glutamyl-phosphate reductase 2 (322 aa).

Residue Cys117 is part of the active site.

Belongs to the NAGSA dehydrogenase family. Type 2 subfamily.

It localises to the cytoplasm. The enzyme catalyses N-acetyl-L-glutamate 5-semialdehyde + phosphate + NADP(+) = N-acetyl-L-glutamyl 5-phosphate + NADPH + H(+). The protein operates within amino-acid biosynthesis; L-arginine biosynthesis; N(2)-acetyl-L-ornithine from L-glutamate: step 3/4. In terms of biological role, catalyzes the NADPH-dependent reduction of N-acetyl-5-glutamyl phosphate to yield N-acetyl-L-glutamate 5-semialdehyde. The sequence is that of N-acetyl-gamma-glutamyl-phosphate reductase 2 from Nostoc sp. (strain PCC 7120 / SAG 25.82 / UTEX 2576).